A 410-amino-acid chain; its full sequence is S-adenosylmethionine synthase (410 aa).

H15 lines the ATP pocket. D17 lines the Mg(2+) pocket. E43 contributes to the K(+) binding site. L-methionine-binding residues include E56 and Q100. The flexible loop stretch occupies residues 100–110; it reads QSPDIAKGVDT. ATP is bound by residues 171 to 173, 248 to 249, D257, 263 to 264, A280, and K284; these read DGK, KF, and RK. Position 257 (D257) interacts with L-methionine. K288 is a binding site for L-methionine.

Belongs to the AdoMet synthase family. In terms of assembly, homotetramer; dimer of dimers. Mg(2+) serves as cofactor. The cofactor is K(+).

Its subcellular location is the cytoplasm. The catalysed reaction is L-methionine + ATP + H2O = S-adenosyl-L-methionine + phosphate + diphosphate. It functions in the pathway amino-acid biosynthesis; S-adenosyl-L-methionine biosynthesis; S-adenosyl-L-methionine from L-methionine: step 1/1. Its function is as follows. Catalyzes the formation of S-adenosylmethionine (AdoMet) from methionine and ATP. The overall synthetic reaction is composed of two sequential steps, AdoMet formation and the subsequent tripolyphosphate hydrolysis which occurs prior to release of AdoMet from the enzyme. In Prochlorococcus marinus (strain MIT 9211), this protein is S-adenosylmethionine synthase.